The following is a 179-amino-acid chain: Acireductone dioxygenase (179 aa).

Residues His88, His90, Glu94, and His133 each coordinate Fe(2+). His88, His90, Glu94, and His133 together coordinate Ni(2+).

This sequence belongs to the acireductone dioxygenase (ARD) family. In terms of assembly, monomer. Interacts with MMP14. Fe(2+) serves as cofactor. Requires Ni(2+) as cofactor.

The protein localises to the cytoplasm. It localises to the nucleus. Its subcellular location is the cell membrane. It carries out the reaction 1,2-dihydroxy-5-(methylsulfanyl)pent-1-en-3-one + O2 = 4-methylsulfanyl-2-oxobutanoate + formate + 2 H(+). It catalyses the reaction 1,2-dihydroxy-5-(methylsulfanyl)pent-1-en-3-one + O2 = 3-(methylsulfanyl)propanoate + CO + formate + 2 H(+). Its pathway is amino-acid biosynthesis; L-methionine biosynthesis via salvage pathway; L-methionine from S-methyl-5-thio-alpha-D-ribose 1-phosphate: step 5/6. Catalyzes 2 different reactions between oxygen and the acireductone 1,2-dihydroxy-3-keto-5-methylthiopentene (DHK-MTPene) depending upon the metal bound in the active site. Fe-containing acireductone dioxygenase (Fe-ARD) produces formate and 2-keto-4-methylthiobutyrate (KMTB), the alpha-ketoacid precursor of methionine in the methionine recycle pathway. Ni-containing acireductone dioxygenase (Ni-ARD) produces methylthiopropionate, carbon monoxide and formate, and does not lie on the methionine recycle pathway. Also down-regulates cell migration mediated by MMP14. The chain is Acireductone dioxygenase from Macaca mulatta (Rhesus macaque).